Consider the following 187-residue polypeptide: Dirigent protein 23 (187 aa).

Residues 1–24 (MAKEEYVSRMLVMLIMIMPLVAQG) form the signal peptide. A glycan (N-linked (GlcNAc...) asparagine) is linked at Asn182.

It belongs to the plant dirigent protein family. As to quaternary structure, homodimer.

Its subcellular location is the secreted. The protein localises to the extracellular space. The protein resides in the apoplast. Its function is as follows. Dirigent proteins impart stereoselectivity on the phenoxy radical-coupling reaction, yielding optically active lignans from two molecules of coniferyl alcohol in the biosynthesis of lignans, flavonolignans, and alkaloids and thus plays a central role in plant secondary metabolism. The polypeptide is Dirigent protein 23 (DIR23) (Arabidopsis thaliana (Mouse-ear cress)).